The primary structure comprises 310 residues: Putative integrase/recombinase y4rE (310 aa).

Residues 6–83 enclose the Core-binding (CB) domain; sequence RFLGEKVERY…VLRRFYEYLA (78 aa). Residues 104-301 form the Tyr recombinase domain; the sequence is PPPRILSEAE…SVDLLAMAAE (198 aa). Residues Arg148, Lys173, His245, Arg248, and His279 contribute to the active site. Tyr288 acts as the O-(3'-phospho-DNA)-tyrosine intermediate in catalysis.

It belongs to the 'phage' integrase family.

This is Putative integrase/recombinase y4rE from Sinorhizobium fredii (strain NBRC 101917 / NGR234).